A 703-amino-acid chain; its full sequence is RING finger protein 214 (703 aa).

Disordered stretches follow at residues 1-59 (MAAS…TITK), 104-134 (GSQSDLKDVASTAGEEGDTSLRESLHPVTRS), and 146-197 (SRNC…SSSL). The residue at position 2 (A2) is an N-acetylalanine. 4 positions are modified to phosphoserine: S15, S40, S47, and S54. Residues 37–59 (TKDSAQKQKNSPLLSVSSQTITK) are compositionally biased toward polar residues. Phosphoserine is present on residues S176 and S196. The stretch at 220–379 (QDIEKNLDKM…AEKEAELHLT (160 aa)) forms a coiled coil. The segment at 486-552 (FPILNPALSQ…SAETPRPQPV (67 aa)) is disordered. The span at 493 to 504 (LSQPSQPSSPLP) shows a compositional bias: low complexity. 3 positions are modified to phosphoserine: S497, S511, and S516. The span at 523–536 (PHMPPAASIPPPPG) shows a compositional bias: pro residues. The RING-type; atypical zinc finger occupies 658–700 (CLMCQKLVQPSELHPMACTHVLHKECIKFWAQTNTNDTCPFCP).

This chain is RING finger protein 214 (RNF214), found in Homo sapiens (Human).